A 250-amino-acid polypeptide reads, in one-letter code: Iron-sulfur assembly protein 1 (250 aa).

A disordered region spans residues 54 to 89 (AADSVSPDSQRPGKKPFKFIVSNQSKSSKASKSPKW). Residues 75–89 (SNQSKSSKASKSPKW) are compositionally biased toward low complexity. C178, C242, and C244 together coordinate Fe cation.

The protein belongs to the HesB/IscA family.

It localises to the mitochondrion matrix. In terms of biological role, involved in the assembly of mitochondrial and cytoplasmic iron-sulfur proteins. Probably involved in the binding of an intermediate of Fe/S cluster assembly. In Saccharomyces cerevisiae (strain ATCC 204508 / S288c) (Baker's yeast), this protein is Iron-sulfur assembly protein 1 (ISA1).